The primary structure comprises 371 residues: Histidinol-phosphate aminotransferase (371 aa).

N6-(pyridoxal phosphate)lysine is present on lysine 228.

The protein belongs to the class-II pyridoxal-phosphate-dependent aminotransferase family. Histidinol-phosphate aminotransferase subfamily. The cofactor is pyridoxal 5'-phosphate.

The enzyme catalyses L-histidinol phosphate + 2-oxoglutarate = 3-(imidazol-4-yl)-2-oxopropyl phosphate + L-glutamate. It participates in amino-acid biosynthesis; L-histidine biosynthesis; L-histidine from 5-phospho-alpha-D-ribose 1-diphosphate: step 7/9. In Methanococcus maripaludis (strain C6 / ATCC BAA-1332), this protein is Histidinol-phosphate aminotransferase.